A 69-amino-acid polypeptide reads, in one-letter code: MKEGIHPTYYHDAVVRCACGETFITGSTKKEIHVEICSKCHPFFTGKQKFVDTTGRVERFMKKYGLDQK.

Cys-17, Cys-19, Cys-37, and Cys-40 together coordinate Zn(2+).

Belongs to the bacterial ribosomal protein bL31 family. Type A subfamily. As to quaternary structure, part of the 50S ribosomal subunit. It depends on Zn(2+) as a cofactor.

Its function is as follows. Binds the 23S rRNA. In Caldicellulosiruptor bescii (strain ATCC BAA-1888 / DSM 6725 / KCTC 15123 / Z-1320) (Anaerocellum thermophilum), this protein is Large ribosomal subunit protein bL31.